The primary structure comprises 1492 residues: Collagen alpha-1(II) chain (1492 aa).

The signal sequence occupies residues 1 to 26 (MFSFVDSRTLVLFAATQVILLAVVRC). A propeptide spans 27-186 (QDEEDVLATG…PPGLGGNFAA (160 aa)) (N-terminal propeptide). A VWFC domain is found at 36-94 (GSCVQHGQRYSDKDVWKPEPCQICVCDTGNVLCDEIICEDPKDCPNAEIPFGECCPICP). The segment at 98 to 1255 (SSTSSGQGVL…ADQASSSVPQ (1158 aa)) is disordered. Composition is skewed to basic and acidic residues over residues 110–121 (QKGEPGDIKDVV) and 138–159 (PRGD…RDGE). The segment covering 163 to 178 (PGNPGPVGPPGPPGPP) has biased composition (pro residues). Positions 197–208 (GGAQMGVMQGPM) are enriched in low complexity. The segment at 206–1219 (GPMGPMGPRG…PGPPGPPGPP (1014 aa)) is triple-helical region. Over residues 213–222 (PRGPPGPTGA) the composition is skewed to pro residues. A compositionally biased stretch (low complexity) spans 223–234 (PGPQGFQGNPGE). Gly residues predominate over residues 236–245 (GEPGAGGPMG). The span at 256–270 (PGDDGEAGKPGKSGE) shows a compositional bias: basic and acidic residues. Positions 311-320 (GAKGEGGATG) are enriched in gly residues. 4 stretches are compositionally biased toward low complexity: residues 321-333 (EAGS…PRGL), 340-355 (PGAS…DGLP), 366-376 (PAGAPGFPGAP), and 396-436 (PRGE…AGAP). The span at 438 to 447 (FPGPRGPPGP) shows a compositional bias: pro residues. Low complexity-rich tracts occupy residues 480–490 (SAGPQGAPGPA) and 501–517 (EPGA…RGAP). Residues 539-548 (GVPGLGGPKG) show a composition bias toward gly residues. Composition is skewed to low complexity over residues 627 to 636 (LLGAPGLRGL) and 645 to 655 (AQGPNGPAGPA). A 4-hydroxyproline mark is found at Pro664 and Pro673. Pro675 is modified (3-hydroxyproline). A 4-hydroxyproline mark is found at Pro676 and Pro679. Positions 711-741 (ERGSSGPQGLQGPRGLPGTPGTDGPKGATGP) are enriched in low complexity. The span at 769–780 (KGDRGDTGEKGP) shows a compositional bias: basic and acidic residues. 2 stretches are compositionally biased toward low complexity: residues 838–850 (AGFA…DGQA) and 894–910 (AQGP…AGRV). Pro912 is modified (3-hydroxyproline). Residues Pro913, Pro919, and Pro925 each carry the 4-hydroxyproline modification. Low complexity predominate over residues 919–930 (PGPSGAPGSAGK). The span at 1010–1019 (GKQGGPGSAG) shows a compositional bias: gly residues. Residues 1105–1114 (SGPAGARGLP) are compositionally biased toward low complexity. Basic and acidic residues predominate over residues 1120–1134 (RGDKGEAGEAGERGQ). Low complexity-rich tracts occupy residues 1140 to 1159 (FTGL…QGAS) and 1176 to 1186 (PSGKDGSNGLP). Residue Pro1149 is modified to 3-hydroxyproline. Residue Pro1186 is modified to 4-hydroxyproline. Position 1191 is a 3-hydroxyproline (Pro1191). Position 1192 is a 4-hydroxyproline (Pro1192). Pro residues predominate over residues 1204–1221 (AGPPGQPGPPGPPGPPGP). The residue at position 1206 (Pro1206) is a 3-hydroxyproline. 4-hydroxyproline is present on residues Pro1207 and Pro1210. Pro1212 carries the post-translational modification 3-hydroxyproline. Residues Pro1213 and Pro1216 each carry the 4-hydroxyproline modification. At Pro1218 the chain carries 3-hydroxyproline. 4-hydroxyproline is present on Pro1219. The tract at residues 1220–1246 (GPGIDMSAFAGLSQPEKGPDPMRYMRA) is nonhelical region (C-terminal). The segment covering 1236-1245 (KGPDPMRYMR) has biased composition (basic and acidic residues). The propeptide at 1247 to 1492 (DQASSSVPQR…GVDIGPVCFL (246 aa)) is C-terminal propeptide. Residues 1258 to 1492 (VDVEATLKSL…GVDIGPVCFL (235 aa)) enclose the Fibrillar collagen NC1 domain. 3 disulfide bridges follow: Cys1288–Cys1320, Cys1328–Cys1490, and Cys1398–Cys1443. Positions 1306, 1308, 1309, 1311, and 1314 each coordinate Ca(2+). A glycan (N-linked (GlcNAc...) asparagine) is linked at Asn1393.

It belongs to the fibrillar collagen family. In terms of assembly, homotrimers of alpha 1(II) chains. In terms of processing, contains mostly 4-hydroxyproline. Prolines at the third position of the tripeptide repeating unit (G-X-P) are 4-hydroxylated in some or all of the chains. Contains 3-hydroxyproline at a few sites. This modification occurs on the first proline residue in the sequence motif Gly-Pro-Hyp, where Hyp is 4-hydroxyproline. Post-translationally, lysine residues at the third position of the tripeptide repeating unit (G-X-Y) are 5-hydroxylated in some or all of the chains. In terms of processing, O-glycosylated on hydroxylated lysine residues. The O-linked glycan consists of a Glc-Gal disaccharide.

The protein resides in the secreted. It is found in the extracellular space. Its subcellular location is the extracellular matrix. Functionally, type II collagen is specific for cartilaginous tissues. It is essential for the normal embryonic development of the skeleton, for linear growth and for the ability of cartilage to resist compressive forces. This Xenopus tropicalis (Western clawed frog) protein is Collagen alpha-1(II) chain.